Consider the following 683-residue polypeptide: Phosphomethylpyrimidine synthase (683 aa).

Substrate is bound by residues Asn235, Met264, Tyr293, His329, 349-351 (SRG), 390-393 (DGMR), and Glu429. His433 is a Zn(2+) binding site. Tyr456 is a binding site for substrate. A Zn(2+)-binding site is contributed by His497. The [4Fe-4S] cluster site is built by Cys577, Cys580, and Cys585. A disordered region spans residues 647-683 (RQSPGVESTSLESTSLESTVLESTSLESTALEKAKEV). Over residues 653–675 (ESTSLESTSLESTVLESTSLEST) the composition is skewed to low complexity.

The protein belongs to the ThiC family. Homodimer. It depends on [4Fe-4S] cluster as a cofactor.

The catalysed reaction is 5-amino-1-(5-phospho-beta-D-ribosyl)imidazole + S-adenosyl-L-methionine = 4-amino-2-methyl-5-(phosphooxymethyl)pyrimidine + CO + 5'-deoxyadenosine + formate + L-methionine + 3 H(+). It functions in the pathway cofactor biosynthesis; thiamine diphosphate biosynthesis. Catalyzes the synthesis of the hydroxymethylpyrimidine phosphate (HMP-P) moiety of thiamine from aminoimidazole ribotide (AIR) in a radical S-adenosyl-L-methionine (SAM)-dependent reaction. In Shewanella loihica (strain ATCC BAA-1088 / PV-4), this protein is Phosphomethylpyrimidine synthase.